A 239-amino-acid polypeptide reads, in one-letter code: Mitochondrial fission factor homolog B (239 aa).

Topologically, residues 1 to 219 (MAEINRMQYE…ENKERVKHEM (219 aa)) are cytoplasmic. The segment at 107–139 (EGPAPATPHSKEVRSSGHLKRDGLASENSLRQN) is disordered. The segment covering 115–130 (HSKEVRSSGHLKRDGL) has biased composition (basic and acidic residues). The stretch at 184-214 (DLALADAASLRRQIIKLNRRLLLLEEENKER) forms a coiled coil. The chain crosses the membrane as a helical; Anchor for type IV membrane protein span at residues 220-237 (TMYSIIIIFGLLNSWLWF). Over 238–239 (RR) the chain is Extracellular.

The protein belongs to the Tango11 family.

Its subcellular location is the mitochondrion outer membrane. It is found in the peroxisome. Functionally, plays a role in mitochondrial and peroxisomal fission. Promotes the recruitment and association of the fission mediator dynamin-related protein 1 (DNM1L) to the mitochondrial surface. This Xenopus laevis (African clawed frog) protein is Mitochondrial fission factor homolog B (mff-b).